We begin with the raw amino-acid sequence, 383 residues long: Outer membrane protein S2 (383 aa).

The first 21 residues, 1–21 (MKRKVLALVIPALLAAGAAHA), serve as a signal peptide directing secretion.

Belongs to the Gram-negative porin family. Homotrimer.

Its subcellular location is the cell outer membrane. Functionally, forms pores that allow passive diffusion of small molecules across the outer membrane. The polypeptide is Outer membrane protein S2 (ompS2) (Salmonella typhi).